The chain runs to 117 residues: Small ribosomal subunit protein bS18c (117 aa).

Residues 86 to 117 form a disordered region; the sequence is SELTPRTNALKARNKNKQNKYQNNQTKFLSNF.

The protein belongs to the bacterial ribosomal protein bS18 family. In terms of assembly, part of the 30S ribosomal subunit.

The protein localises to the plastid. This is Small ribosomal subunit protein bS18c from Cuscuta exaltata (Tall dodder).